The following is a 37-amino-acid chain: Esculentin-2Rb (37 aa).

Cysteines 31 and 37 form a disulfide.

Expressed by the skin glands.

The protein resides in the secreted. Antimicrobial peptide. The chain is Esculentin-2Rb from Pelophylax ridibundus (Marsh frog).